The chain runs to 83 residues: MQDELFETEKAPPKNAKNAPKKSFEEHVHSLEQAIDRLNDPNLSLKDGMDLYKTAMQELFLAQKLLENAYLEYEKLQTTDKKA.

A disordered region spans residues 1 to 25 (MQDELFETEKAPPKNAKNAPKKSFE).

It belongs to the XseB family. As to quaternary structure, heterooligomer composed of large and small subunits.

It localises to the cytoplasm. The enzyme catalyses Exonucleolytic cleavage in either 5'- to 3'- or 3'- to 5'-direction to yield nucleoside 5'-phosphates.. Bidirectionally degrades single-stranded DNA into large acid-insoluble oligonucleotides, which are then degraded further into small acid-soluble oligonucleotides. In Helicobacter pylori (strain P12), this protein is Exodeoxyribonuclease 7 small subunit.